Here is a 272-residue protein sequence, read N- to C-terminus: GPN-loop GTPase 3 (272 aa).

Position 12 to 17 (Gly-12 to Thr-17) interacts with GTP. The Gly-Pro-Asn (GPN)-loop; involved in dimer interface signature appears at Gly-69 to Asn-71. Residue Ser-172 to Asp-175 coordinates GTP. The interval Gln-253–Asp-272 is disordered.

The protein belongs to the GPN-loop GTPase family. As to quaternary structure, heterodimers with GPN1 or GPN2. Binds to RNA polymerase II (RNAPII).

Its function is as follows. Small GTPase required for proper nuclear import of RNA polymerase II and III (RNAPII and RNAPIII). May act at an RNAP assembly step prior to nuclear import. This is GPN-loop GTPase 3 from Cryptococcus neoformans var. neoformans serotype D (strain JEC21 / ATCC MYA-565) (Filobasidiella neoformans).